Reading from the N-terminus, the 665-residue chain is Probable protein transport Sec1a (665 aa).

Residues 543-594 are disordered; it reads PSPSFRGIPSASTQTSPAHQPAQSMRSRRTGGTWARPRDSDDGYSSDSVLKH. 2 stretches are compositionally biased toward polar residues: residues 552-567 and 585-594; these read SASTQTSPAHQPAQSM and GYSSDSVLKH.

This sequence belongs to the STXBP/unc-18/SEC1 family.

In terms of biological role, involved in the vesicle trafficking. Binds syntaxins. The sequence is that of Probable protein transport Sec1a from Oryza sativa subsp. japonica (Rice).